A 539-amino-acid chain; its full sequence is Alpha-aminoadipic semialdehyde dehydrogenase (539 aa).

Residues M1–A26 constitute a mitochondrion transit peptide. K94 bears the N6-acetyllysine; alternate mark. Position 94 is an N6-succinyllysine; alternate (K94). NAD(+) is bound by residues T192–F194, K218, G258–T259, G274–S275, G274–G279, and E296–L297. E296 serves as the catalytic Proton acceptor. C330 functions as the Nucleophile in the catalytic mechanism. T331 serves as a coordination point for (S)-2-amino-6-oxohexanoate. E427 contributes to the NAD(+) binding site. Residue K462 is modified to N6-acetyllysine. (S)-2-amino-6-oxohexanoate is bound by residues G489 and A490. K500 bears the N6-acetyllysine mark. The residue at position 537 (K537) is an N6-succinyllysine.

Belongs to the aldehyde dehydrogenase family. In terms of assembly, homotetramer.

It localises to the cytoplasm. Its subcellular location is the cytosol. It is found in the nucleus. The protein localises to the mitochondrion. The enzyme catalyses nonanal + NAD(+) + H2O = nonanoate + NADH + 2 H(+). It carries out the reaction (S)-2-amino-6-oxohexanoate + NAD(+) + H2O = L-2-aminoadipate + NADH + 2 H(+). The catalysed reaction is betaine aldehyde + NAD(+) + H2O = glycine betaine + NADH + 2 H(+). It catalyses the reaction an aldehyde + NAD(+) + H2O = a carboxylate + NADH + 2 H(+). The enzyme catalyses hexanal + NAD(+) + H2O = hexanoate + NADH + 2 H(+). It carries out the reaction octanal + NAD(+) + H2O = octanoate + NADH + 2 H(+). The catalysed reaction is (E)-non-2-enal + NAD(+) + H2O = (E)-non-2-enoate + NADH + 2 H(+). It catalyses the reaction (E)-4-hydroxynon-2-enal + NAD(+) + H2O = (E)-4-hydroxynon-2-enoate + NADH + 2 H(+). It functions in the pathway amine and polyamine biosynthesis; betaine biosynthesis via choline pathway; betaine from betaine aldehyde: step 1/1. Functionally, multifunctional enzyme mediating important protective effects. Metabolizes betaine aldehyde to betaine, an important cellular osmolyte and methyl donor. Protects cells from oxidative stress by metabolizing a number of lipid peroxidation-derived aldehydes. Involved in lysine catabolism. In Bos taurus (Bovine), this protein is Alpha-aminoadipic semialdehyde dehydrogenase (ALDH7A1).